We begin with the raw amino-acid sequence, 517 residues long: Crotonobetaine/carnitine--CoA ligase (517 aa).

It belongs to the ATP-dependent AMP-binding enzyme family.

The enzyme catalyses 4-(trimethylamino)butanoate + ATP + CoA = 4-(trimethylamino)butanoyl-CoA + AMP + diphosphate. The catalysed reaction is crotonobetaine + ATP + CoA = crotonobetainyl-CoA + AMP + diphosphate. It carries out the reaction (R)-carnitine + ATP + CoA = (R)-carnitinyl-CoA + AMP + diphosphate. The protein operates within amine and polyamine metabolism; carnitine metabolism. Its function is as follows. Catalyzes the transfer of CoA to carnitine, generating the initial carnitinyl-CoA needed for the CaiB reaction cycle. Also has activity toward crotonobetaine and gamma-butyrobetaine. This Escherichia coli (strain ATCC 8739 / DSM 1576 / NBRC 3972 / NCIMB 8545 / WDCM 00012 / Crooks) protein is Crotonobetaine/carnitine--CoA ligase.